The sequence spans 299 residues: Fluorinase (299 aa).

S-adenosyl-L-methionine-binding positions include aspartate 16, 21–23, tyrosine 77, serine 158, aspartate 210, asparagine 215, 269–270, and 277–279; these read DDS, SR, and RNA.

In terms of assembly, homohexamer; dimers of trimer.

It catalyses the reaction fluoride + S-adenosyl-L-methionine = 5'-deoxy-5'-fluoroadenosine + L-methionine. Its activity is regulated as follows. Competitively inhibited by S-adenosyl-L-homocysteine (AdoHcy) and S-adenosyl-L-homocysteine (SAH). Sinefungin is only weakly inhibitory. Involved in the biosynthesis of fluorometabolites. Catalyzes the formation of a C-F bond by combining S-adenosyl-L-methionine (SAM) and fluoride to generate 5'-fluoro-5'-deoxyadenosine (5'-FDA) and L-methionine. It can also use 2'-deoxyadenosine in place of adenosine as substrate. The sequence is that of Fluorinase from Streptantibioticus cattleyicolor (Streptomyces cattleya).